Here is a 403-residue protein sequence, read N- to C-terminus: Argininosuccinate synthase (403 aa).

Residues 10–18 (AYSGGVDTS) and Ala38 contribute to the ATP site. An L-citrulline-binding site is contributed by Tyr89. ATP is bound at residue Gly119. The L-aspartate site is built by Thr121, Asn125, and Asp126. Asn125 contacts L-citrulline. L-citrulline is bound by residues Arg129, Ser177, Ser186, Glu262, and Tyr274.

The protein belongs to the argininosuccinate synthase family. Type 1 subfamily. As to quaternary structure, homotetramer.

The protein localises to the cytoplasm. The enzyme catalyses L-citrulline + L-aspartate + ATP = 2-(N(omega)-L-arginino)succinate + AMP + diphosphate + H(+). It functions in the pathway amino-acid biosynthesis; L-arginine biosynthesis; L-arginine from L-ornithine and carbamoyl phosphate: step 2/3. The chain is Argininosuccinate synthase from Parasynechococcus marenigrum (strain WH8102).